The chain runs to 1087 residues: Exportin-7 (1087 aa).

The residue at position 2 (Ala-2) is an N-acetylalanine. Residues 30–96 (AEKALVEFTN…RNYVLNYLAT (67 aa)) form the Importin N-terminal domain. Ser-570 bears the Phosphoserine mark.

Belongs to the exportin family. In terms of assembly, binds to nucleoporins. Found in a complex with XPO7, EIF4A1, ARHGAP1, VPS26A, VPS29, VPS35 and SFN. Interacts with ARHGAP1 and SFN. Interacts with Ran and cargo proteins in a GTP-dependent manner.

It localises to the cytoplasm. It is found in the nucleus. The protein localises to the nuclear pore complex. Its function is as follows. Mediates the nuclear export of proteins (cargos) with broad substrate specificity. In the nucleus binds cooperatively to its cargo and to the GTPase Ran in its active GTP-bound form. Docking of this trimeric complex to the nuclear pore complex (NPC) is mediated through binding to nucleoporins. Upon transit of a nuclear export complex into the cytoplasm, disassembling of the complex and hydrolysis of Ran-GTP to Ran-GDP (induced by RANBP1 and RANGAP1, respectively) cause release of the cargo from the export receptor. XPO7 then return to the nuclear compartment and mediate another round of transport. The directionality of nuclear export is thought to be conferred by an asymmetric distribution of the GTP- and GDP-bound forms of Ran between the cytoplasm and nucleus. The polypeptide is Exportin-7 (XPO7) (Pongo abelii (Sumatran orangutan)).